The chain runs to 223 residues: N-(5'-phosphoribosyl)anthranilate isomerase (223 aa).

Belongs to the TrpF family.

The enzyme catalyses N-(5-phospho-beta-D-ribosyl)anthranilate = 1-(2-carboxyphenylamino)-1-deoxy-D-ribulose 5-phosphate. It functions in the pathway amino-acid biosynthesis; L-tryptophan biosynthesis; L-tryptophan from chorismate: step 3/5. This chain is N-(5'-phosphoribosyl)anthranilate isomerase, found in Moorella thermoacetica (strain ATCC 39073 / JCM 9320).